Here is a 1039-residue protein sequence, read N- to C-terminus: DIS3-like exonuclease 1 (1039 aa).

One can recognise a CSD1 domain in the interval 221–309 (PEHLPLEILE…KGRNGALCEN (89 aa)). The 67-residue stretch at 359-425 (VLVMPWDYRI…AEIATILVEN (67 aa)) folds into the CSD2 domain. The region spanning 458-807 (RLDLRKTHLV…VHRLLLAAVN (350 aa)) is the RNB domain.

This sequence belongs to the RNR ribonuclease family. Component of the RNA exosome complex. The cofactor is Mg(2+).

Its subcellular location is the cytoplasm. It carries out the reaction Exonucleolytic cleavage in the 3'- to 5'-direction to yield nucleoside 5'-phosphates.. Catalytic component of the RNA exosome complex which has 3'-&gt;5' exoribonuclease activity and participates in a multitude of cellular RNA processing and degradation events. The polypeptide is DIS3-like exonuclease 1 (dis3l) (Xenopus tropicalis (Western clawed frog)).